We begin with the raw amino-acid sequence, 130 residues long: Small ribosomal subunit protein uS8 (130 aa).

It belongs to the universal ribosomal protein uS8 family. In terms of assembly, part of the 30S ribosomal subunit.

Functionally, one of the primary rRNA binding proteins, it binds directly to 16S rRNA central domain where it helps coordinate assembly of the platform of the 30S subunit. This chain is Small ribosomal subunit protein uS8, found in Methanocorpusculum labreanum (strain ATCC 43576 / DSM 4855 / Z).